Here is a 226-residue protein sequence, read N- to C-terminus: Isoprenyl transferase (226 aa).

D12 is an active-site residue. D12 contributes to the Mg(2+) binding site. Substrate-binding positions include 13–16 (GNAR), W17, K25, H29, and 57–59 (SSE). N60 functions as the Proton acceptor in the catalytic mechanism. Substrate contacts are provided by residues W61, R63, R174, and 180–182 (RIS). E193 lines the Mg(2+) pocket.

It belongs to the UPP synthase family. As to quaternary structure, homodimer. Mg(2+) serves as cofactor.

In terms of biological role, catalyzes the condensation of isopentenyl diphosphate (IPP) with allylic pyrophosphates generating different type of terpenoids. This chain is Isoprenyl transferase, found in Rickettsia bellii (strain RML369-C).